We begin with the raw amino-acid sequence, 361 residues long: [LysW]-lysine hydrolase (361 aa).

His-67 is a binding site for Zn(2+). The active site involves Asp-69. A Zn(2+)-binding site is contributed by Asp-91. The active-site Proton acceptor is the Glu-124. Positions 125, 148, and 326 each coordinate Zn(2+).

It belongs to the peptidase M20A family. LysK subfamily. Requires Zn(2+) as cofactor. The cofactor is Co(2+).

It localises to the cytoplasm. It catalyses the reaction [amino-group carrier protein]-C-terminal-gamma-(L-lysyl)-L-glutamate + H2O = [amino-group carrier protein]-C-terminal-L-glutamate + L-lysine. It participates in amino-acid biosynthesis; L-lysine biosynthesis via AAA pathway; L-lysine from L-alpha-aminoadipate (Thermus route): step 5/5. Its function is as follows. Catalyzes the release of L-lysine from [LysW]-gamma-L-lysine. The sequence is that of [LysW]-lysine hydrolase from Thermus thermophilus (strain ATCC 27634 / DSM 579 / HB8).